A 149-amino-acid chain; its full sequence is Large ribosomal subunit protein uL11 (149 aa).

It belongs to the universal ribosomal protein uL11 family. In terms of assembly, part of the ribosomal stalk of the 50S ribosomal subunit. Interacts with L10 and the large rRNA to form the base of the stalk. L10 forms an elongated spine to which L12 dimers bind in a sequential fashion forming a multimeric L10(L12)X complex. One or more lysine residues are methylated.

Its function is as follows. Forms part of the ribosomal stalk which helps the ribosome interact with GTP-bound translation factors. The chain is Large ribosomal subunit protein uL11 from Methylorubrum extorquens (strain CM4 / NCIMB 13688) (Methylobacterium extorquens).